We begin with the raw amino-acid sequence, 365 residues long: S-adenosylmethionine:tRNA ribosyltransferase-isomerase (365 aa).

It belongs to the QueA family. Monomer.

It localises to the cytoplasm. The catalysed reaction is 7-aminomethyl-7-carbaguanosine(34) in tRNA + S-adenosyl-L-methionine = epoxyqueuosine(34) in tRNA + adenine + L-methionine + 2 H(+). It participates in tRNA modification; tRNA-queuosine biosynthesis. Functionally, transfers and isomerizes the ribose moiety from AdoMet to the 7-aminomethyl group of 7-deazaguanine (preQ1-tRNA) to give epoxyqueuosine (oQ-tRNA). The sequence is that of S-adenosylmethionine:tRNA ribosyltransferase-isomerase from Helicobacter hepaticus (strain ATCC 51449 / 3B1).